Here is a 160-residue protein sequence, read N- to C-terminus: Troponin C, skeletal muscle (160 aa).

Thr2 carries the N-acetylthreonine modification. 4 EF-hand domains span residues 15-50 (EMIAEFKAAFDMFDADGGGDISVKELGTVMRMLGQT), 51-86 (PTKEELDAIIEEVDEDGSGTIDFEEFLVMMVRQMKE), 91-126 (KSEEELAECFRIFDRNADGYIDAEELAEIFRASGEH), and 127-160 (VTEEEIESLMKDGDKNNDGRIDFDEFLKMMEGVQ). The Ca(2+) site is built by Asp28, Asp30, Asp34, Glu39, Asp64, Asp66, Ser68, Thr70, Glu75, Asp104, Asn106, Asp108, Tyr110, Glu115, Asp140, Asn142, Asp144, Arg146, and Glu151.

Belongs to the troponin C family. As to expression, fast skeletal muscle.

Functionally, troponin is the central regulatory protein of striated muscle contraction. Tn consists of three components: Tn-I which is the inhibitor of actomyosin ATPase, Tn-T which contains the binding site for tropomyosin and Tn-C. The binding of calcium to Tn-C abolishes the inhibitory action of Tn on actin filaments. This chain is Troponin C, skeletal muscle (Tnnc2), found in Mus musculus (Mouse).